Here is a 214-residue protein sequence, read N- to C-terminus: Thymidylate kinase (214 aa).

7–14 (GIDGAGKS) serves as a coordination point for ATP.

This sequence belongs to the thymidylate kinase family.

It catalyses the reaction dTMP + ATP = dTDP + ADP. Its function is as follows. Phosphorylation of dTMP to form dTDP in both de novo and salvage pathways of dTTP synthesis. The protein is Thymidylate kinase of Chlorobaculum tepidum (strain ATCC 49652 / DSM 12025 / NBRC 103806 / TLS) (Chlorobium tepidum).